Reading from the N-terminus, the 515-residue chain is MTKRALISVSDKSGIIDFAKELKNLGWDIISTGGTKVALDNAGVETIAIDDVTGFPEMMDGRVKTLHPNIHGGLLARRDVDSHLQAAKDNNIELIDLVVVNLYPFKETILRPDVTYDLAVENIDIGGPSMLRSAAKNHASVTVVVDPADYATVLGELADAGQTTFETRQRLAAKVFRHIAAYDALIAEYFTAQVGEAKPEKLTITYDLKQAMRYGENPQQDADFYQKALPTDYSIASAKQLNGKELSFNNIRDVDAAIRIIRDFKDRPTVVALKHMNPCGIGQADDIETAWDYAYEADPVSIFGGIVVLNREVDAATAKKMHPIFLEIIIAPSYSEEALAILTNKKKNLRILELPFDAQAASEVEAEYTGVVGGLLVQNQDVVAENPSDWQVVTDRQPTEQEATALEFAWKAIKYVKSNGIIITNDHMTLGLGAGQTNRVGSVKIAIEQAKDHLDGAVLASDAFFPFADNIEEVAAAGVKAIIQPGGSVRDQDSIDAANKHGLTMIFTGVRHFRH.

Residues 1-145 enclose the MGS-like domain; sequence MTKRALISVS…KNHASVTVVV (145 aa).

The protein belongs to the PurH family.

It catalyses the reaction (6R)-10-formyltetrahydrofolate + 5-amino-1-(5-phospho-beta-D-ribosyl)imidazole-4-carboxamide = 5-formamido-1-(5-phospho-D-ribosyl)imidazole-4-carboxamide + (6S)-5,6,7,8-tetrahydrofolate. The enzyme catalyses IMP + H2O = 5-formamido-1-(5-phospho-D-ribosyl)imidazole-4-carboxamide. The protein operates within purine metabolism; IMP biosynthesis via de novo pathway; 5-formamido-1-(5-phospho-D-ribosyl)imidazole-4-carboxamide from 5-amino-1-(5-phospho-D-ribosyl)imidazole-4-carboxamide (10-formyl THF route): step 1/1. It functions in the pathway purine metabolism; IMP biosynthesis via de novo pathway; IMP from 5-formamido-1-(5-phospho-D-ribosyl)imidazole-4-carboxamide: step 1/1. The sequence is that of Bifunctional purine biosynthesis protein PurH from Streptococcus pyogenes serotype M6 (strain ATCC BAA-946 / MGAS10394).